We begin with the raw amino-acid sequence, 357 residues long: Embryonic growth/differentiation factor 1 (357 aa).

Residues 1-23 (MLPVCHRFCDHLLLLLLLPSTTL) form the signal peptide. The propeptide occupies 24-237 (APAPASMGPA…RLCPLPRLRR (214 aa)). N191 carries an N-linked (GlcNAc...) asparagine glycan. Cystine bridges form between C251-C322, C280-C354, and C284-C356.

Belongs to the TGF-beta family. As to quaternary structure, homodimer; disulfide-linked. Expressed almost exclusively in the nervous system.

It localises to the secreted. In terms of biological role, may mediate cell differentiation events during embryonic development. The protein is Embryonic growth/differentiation factor 1 (Gdf1) of Mus musculus (Mouse).